A 202-amino-acid polypeptide reads, in one-letter code: Imidazoleglycerol-phosphate dehydratase (202 aa).

It belongs to the imidazoleglycerol-phosphate dehydratase family.

It is found in the cytoplasm. It catalyses the reaction D-erythro-1-(imidazol-4-yl)glycerol 3-phosphate = 3-(imidazol-4-yl)-2-oxopropyl phosphate + H2O. Its pathway is amino-acid biosynthesis; L-histidine biosynthesis; L-histidine from 5-phospho-alpha-D-ribose 1-diphosphate: step 6/9. The protein is Imidazoleglycerol-phosphate dehydratase of Acinetobacter baumannii (strain SDF).